Here is a 538-residue protein sequence, read N- to C-terminus: Putative cysteine ligase BshC (538 aa).

The protein belongs to the BshC family.

Functionally, involved in bacillithiol (BSH) biosynthesis. May catalyze the last step of the pathway, the addition of cysteine to glucosamine malate (GlcN-Mal) to generate BSH. The protein is Putative cysteine ligase BshC of Halalkalibacterium halodurans (strain ATCC BAA-125 / DSM 18197 / FERM 7344 / JCM 9153 / C-125) (Bacillus halodurans).